The chain runs to 179 residues: MSRLREQYENEIKDAMIKKFGYKNAMEIPKLDKIVVNMGVGEAKENAKVLEAAVKDMEAITGQKAVTTKAKNAIANFKIREGMPIGCKVTLRGEKMYEFADRLINLALPRVRDFRGVNPNAFDGRGNYALGIKEQIIFPEIEYDKVDKVRGMDIIFVTTAKTDEEARELLAQFNMPFAK.

This sequence belongs to the universal ribosomal protein uL5 family. Part of the 50S ribosomal subunit; part of the 5S rRNA/L5/L18/L25 subcomplex. Contacts the 5S rRNA and the P site tRNA. Forms a bridge to the 30S subunit in the 70S ribosome.

In terms of biological role, this is one of the proteins that bind and probably mediate the attachment of the 5S RNA into the large ribosomal subunit, where it forms part of the central protuberance. In the 70S ribosome it contacts protein S13 of the 30S subunit (bridge B1b), connecting the 2 subunits; this bridge is implicated in subunit movement. Contacts the P site tRNA; the 5S rRNA and some of its associated proteins might help stabilize positioning of ribosome-bound tRNAs. The protein is Large ribosomal subunit protein uL5 of Agathobacter rectalis (strain ATCC 33656 / DSM 3377 / JCM 17463 / KCTC 5835 / VPI 0990) (Eubacterium rectale).